The chain runs to 967 residues: MAKPRVHELAKELGITSKEAISKLQELGEFVRGASSTVEPPVAKKLRTAFPAGGDSAPAAKPAAKAPAQGVKKPAAAGPKPGAKAPAKPAASGNAARAEKPAASEAPKAAAASSEAPKSAAPQQGTAPAAASESSAPGTPASSAPRPGGATPGPRKSPAPGAKPGQSAPRPGNNPFASQQGMGRSEGGAQRGGPRPGGQQRSGKPGAPRPGNNPFAAQQGMRSANSGQGGPRPGGPRPGGPRPAQSGQGGPRPGAPRTGAPRQGQGGPRPGGPRPSPNMMPGQTTSVAPIGSRPAPGSGPRRGGGPGGGPGGGGGFRGRGGRGGTQGAFGRGGARGKHRKSKRAKRQELEQMSAPAVGGVSVPHGDGSTVVRLRRGASLMDFAEKINANPASLVTVLIHLGEMATQTQSLDEETFQLLGAELGYQIQVVSPEDEERELLESFDIDLDAELEAEGEDVLAPRPPVVTVMGHVDHGKTRLLDAIRNTKVIEGEAGGITQHIGAYQISTEVDGQERLITFIDTPGHEAFTAMRARGAQVTDIAVLVVAADDGVMPQTVEALNHAQAANVPIVVAVNKVDKPDANPDKIRGQLTEYGLVPEEYGGDTMFVDVSARENLNIDELLDAIVLTADGALELQATPDKNARGVAIEANLDKGRGAVCTVLVQSGTLKVGDSIVAGAAYGRVRAMFDEMGRTVEAATPSRPVQVLGLSTVPRAGDTFLATQEERTARQIAEKREAADRNAQLAKRRKRITLESFDEAVAEGKIDTLNLIIKGDVSGAVEALEDSLLKIDVGEEVQLRVIHRGVGAITQNDVNLATVDNAVIIGFNVRPAERVTELADREGVEMKFYSVIYNAIDEVESALKGMLKPEYEEVELGTAEIREVFRSSKWGNIAGAYVTKGLIRRNGKARLVRDGNVVQDNLSIDSLRRFKDDATEVREGYECGIGLGSFNDIHEGDIIETWEMREKPRD.

Residues 34–363 are disordered; sequence ASSTVEPPVA…APAVGGVSVP (330 aa). Low complexity-rich tracts occupy residues 51-96 and 103-154; these read PAGG…GNAA and ASEA…TPGP. Residues 184–196 show a composition bias toward gly residues; sequence RSEGGAQRGGPRP. Over residues 197 to 206 the composition is skewed to low complexity; the sequence is GGQQRSGKPG. A compositionally biased stretch (gly residues) spans 300 to 333; sequence PRRGGGPGGGPGGGGGFRGRGGRGGTQGAFGRGG. A compositionally biased stretch (basic residues) spans 334-345; that stretch reads ARGKHRKSKRAK. Positions 460–632 constitute a tr-type G domain; it reads PRPPVVTVMG…IVLTADGALE (173 aa). Residues 469 to 476 form a G1 region; the sequence is GHVDHGKT. Position 469 to 476 (469 to 476) interacts with GTP; it reads GHVDHGKT. The tract at residues 494 to 498 is G2; the sequence is GITQH. Residues 519-522 form a G3 region; the sequence is DTPG. GTP is bound by residues 519-523 and 573-576; these read DTPGH and NKVD. The segment at 573–576 is G4; it reads NKVD. The interval 609–611 is G5; sequence SAR.

Belongs to the TRAFAC class translation factor GTPase superfamily. Classic translation factor GTPase family. IF-2 subfamily.

The protein localises to the cytoplasm. Functionally, one of the essential components for the initiation of protein synthesis. Protects formylmethionyl-tRNA from spontaneous hydrolysis and promotes its binding to the 30S ribosomal subunits. Also involved in the hydrolysis of GTP during the formation of the 70S ribosomal complex. This is Translation initiation factor IF-2 from Kocuria rhizophila (strain ATCC 9341 / DSM 348 / NBRC 103217 / DC2201).